Reading from the N-terminus, the 874-residue chain is Probable inorganic carbon transporter subunit DabA (874 aa).

Zn(2+) contacts are provided by Cys398, Asp400, His580, and Cys595.

This sequence belongs to the inorganic carbon transporter (TC 9.A.2) DabA family. Forms a complex with DabB. The cofactor is Zn(2+).

The protein localises to the cell membrane. In terms of biological role, part of an energy-coupled inorganic carbon pump. This is Probable inorganic carbon transporter subunit DabA from Bacillus thuringiensis subsp. konkukian (strain 97-27).